The sequence spans 511 residues: Steroid 17-alpha-hydroxylase/17,20 lyase (511 aa).

Residue C442 participates in heme binding.

The protein belongs to the cytochrome P450 family. Heme is required as a cofactor.

It is found in the endoplasmic reticulum membrane. Its subcellular location is the microsome membrane. The enzyme catalyses a C21-steroid + reduced [NADPH--hemoprotein reductase] + O2 = a 17alpha-hydroxy-C21-steroid + oxidized [NADPH--hemoprotein reductase] + H2O + H(+). The catalysed reaction is progesterone + reduced [NADPH--hemoprotein reductase] + O2 = 17alpha-hydroxyprogesterone + oxidized [NADPH--hemoprotein reductase] + H2O + H(+). It carries out the reaction pregnenolone + reduced [NADPH--hemoprotein reductase] + O2 = 17alpha-hydroxypregnenolone + oxidized [NADPH--hemoprotein reductase] + H2O + H(+). It catalyses the reaction 17alpha-hydroxyprogesterone + reduced [NADPH--hemoprotein reductase] + O2 = androst-4-ene-3,17-dione + acetate + oxidized [NADPH--hemoprotein reductase] + H2O + 2 H(+). The enzyme catalyses 17alpha-hydroxyprogesterone + reduced [NADPH--hemoprotein reductase] + O2 = 16alpha,17alpha-dihydroxyprogesterone + oxidized [NADPH--hemoprotein reductase] + H2O + H(+). The catalysed reaction is 16alpha,17alpha-dihydroxyprogesterone + reduced [NADPH--hemoprotein reductase] + O2 = 6beta,16alpha,17alpha-trihydroxyprogesterone + oxidized [NADPH--hemoprotein reductase] + H2O + H(+). It carries out the reaction 17alpha-hydroxypregnenolone + reduced [NADPH--hemoprotein reductase] + O2 = 3beta-hydroxyandrost-5-en-17-one + acetate + oxidized [NADPH--hemoprotein reductase] + H2O + 2 H(+). It catalyses the reaction 16alpha,17alpha-dihydroxypregnenolone + reduced [NADPH--hemoprotein reductase] + O2 = 3beta,16alpha-dihydroxy-androst-5-en-17-one + acetate + oxidized [NADPH--hemoprotein reductase] + H2O + 2 H(+). The enzyme catalyses 3beta-hydroxyandrost-5-en-17-one + reduced [NADPH--hemoprotein reductase] + O2 = 3beta,16alpha-dihydroxy-androst-5-en-17-one + oxidized [NADPH--hemoprotein reductase] + H2O + H(+). The catalysed reaction is androst-4-ene-3,17-dione + reduced [NADPH--hemoprotein reductase] + O2 = 16alpha-hydroxyandrost-4-ene-3,17-dione + oxidized [NADPH--hemoprotein reductase] + H2O + H(+). The protein operates within steroid hormone biosynthesis. It participates in steroid biosynthesis; glucocorticoid biosynthesis. With respect to regulation, regulated predominantly by intracellular cAMP levels. The 17,20-lyase activity is stimulated by cytochrome b5, which acts as an allosteric effector increasing the Vmax of the lyase activity. Its function is as follows. A cytochrome P450 monooxygenase involved in corticoid and androgen biosynthesis. Catalyzes 17-alpha hydroxylation of C21 steroids, which is common for both pathways. A second oxidative step, required only for androgen synthesis, involves an acyl-carbon cleavage. The 17-alpha hydroxy intermediates, as part of adrenal glucocorticoids biosynthesis pathway, are precursors of cortisol. Hydroxylates steroid hormones, pregnenolone and progesterone to form 17-alpha hydroxy metabolites, followed by the cleavage of the C17-C20 bond to form C19 steroids, dehydroepiandrosterone (DHEA) and androstenedione. Has 16-alpha hydroxylase activity. Catalyzes 16-alpha hydroxylation of 17-alpha hydroxy pregnenolone, followed by the cleavage of the C17-C20 bond to form 16-alpha-hydroxy DHEA. Also 16-alpha hydroxylates androgens, relevant for estriol synthesis. Mechanistically, uses molecular oxygen inserting one oxygen atom into a substrate, and reducing the second into a water molecule, with two electrons provided by NADPH via cytochrome P450 reductase (CPR; NADPH-ferrihemoprotein reductase). This Mesocricetus auratus (Golden hamster) protein is Steroid 17-alpha-hydroxylase/17,20 lyase (CYP17A1).